Reading from the N-terminus, the 26-residue chain is uncharacterized protein (26 aa).

It belongs to the asfivirus E66L family.

This is an uncharacterized protein from Ornithodoros (relapsing fever ticks).